The chain runs to 674 residues: Regulator of G-protein signaling 9 (674 aa).

Residues 30–105 (PETGVRMQNQ…PDGSLYRFQT (76 aa)) enclose the DEP domain. One can recognise a G protein gamma domain in the interval 219–280 (KQTVVAVKKE…NPWITDDTQF (62 aa)). The RGS domain occupies 298–413 (RWAFNFSELI…YARYLKSPIY (116 aa)). A disordered region spans residues 533 to 573 (SSGLEQKGECSGSMAPRGPSVTESSEASLDTSWPRSRPRAP). Positions 553-565 (VTESSEASLDTSW) are enriched in polar residues.

As to quaternary structure, heterodimer with GNB5. Interacts with RGS7BP, leading to regulate the subcellular location of the heterodimer formed with GNB5. Component of the RGS9-1-Gbeta5 complex composed of RGS9 (RGS9-1), Gbeta5 (GNB5) and RGS9BP. Interacts with PDE6G and GNAT1. Post-translationally, retinal isoform 3 is light-dependent phosphorylated at 'Ser-478'. Phosphorylation is decreased by light exposition. As to expression, highly expressed in the caudate and putamen, lower levels found in the hypothalamus and nucleus accumbens and very low levels in cerebellum. Not expressed in globus pallidus or cingulate cortex. Isoform 2 is expressed predominantly in pineal gland and retina. Isoform 3 is expressed in retina (abundant in photoreceptors).

It is found in the membrane. Inhibits signal transduction by increasing the GTPase activity of G protein alpha subunits thereby driving them into their inactive GDP-bound form. Binds to GNAT1. Involved in phototransduction; key element in the recovery phase of visual transduction. The protein is Regulator of G-protein signaling 9 (RGS9) of Homo sapiens (Human).